The chain runs to 351 residues: Small ribosomal subunit biogenesis GTPase RsgA (351 aa).

The region spanning 107-277 (ENLLQRPDNF…LIDSPGIREF (171 aa)) is the CP-type G domain. GTP is bound by residues 163-166 (NKTD) and 219-227 (GQSGVGKSS). 4 residues coordinate Zn(2+): Cys301, Cys306, His308, and Cys314.

Belongs to the TRAFAC class YlqF/YawG GTPase family. RsgA subfamily. In terms of assembly, monomer. Associates with 30S ribosomal subunit, binds 16S rRNA. Zn(2+) serves as cofactor.

The protein resides in the cytoplasm. One of several proteins that assist in the late maturation steps of the functional core of the 30S ribosomal subunit. Helps release RbfA from mature subunits. May play a role in the assembly of ribosomal proteins into the subunit. Circularly permuted GTPase that catalyzes slow GTP hydrolysis, GTPase activity is stimulated by the 30S ribosomal subunit. The sequence is that of Small ribosomal subunit biogenesis GTPase RsgA from Marinobacter nauticus (strain ATCC 700491 / DSM 11845 / VT8) (Marinobacter aquaeolei).